Here is a 100-residue protein sequence, read N- to C-terminus: uncharacterized protein (100 aa).

The first 17 residues, 1–17 (MIMKYFCSVMIAIALVG), serve as a signal peptide directing secretion. The N-palmitoyl cysteine moiety is linked to residue cysteine 18. Cysteine 18 carries the S-diacylglycerol cysteine lipid modification.

It localises to the cell membrane. This is an uncharacterized protein from Salmonella choleraesuis (strain SC-B67).